We begin with the raw amino-acid sequence, 270 residues long: Transmembrane protein 176B (270 aa).

4 helical membrane-spanning segments follow: residues 65–85 (LALG…GVCL), 95–115 (ASGC…GAIV), 127–147 (VSSL…VLCV), and 209–229 (LFLA…GVGL). Ser-236, Ser-245, Ser-254, and Ser-258 each carry phosphoserine. A disordered region spans residues 237–270 (SQPLNEEGSEKRLLGENSVPPSPSREQTSTAIVL). Positions 260–270 (SREQTSTAIVL) are enriched in polar residues.

It belongs to the TMEM176 family.

The protein resides in the nucleus membrane. Functionally, may play a role in the process of maturation of dendritic cells. Required for the development of cerebellar granule cells. This chain is Transmembrane protein 176B (TMEM176B), found in Pongo abelii (Sumatran orangutan).